The chain runs to 104 residues: Small ribosomal subunit protein bS16 (104 aa).

This sequence belongs to the bacterial ribosomal protein bS16 family.

The protein is Small ribosomal subunit protein bS16 of Gemmatimonas aurantiaca (strain DSM 14586 / JCM 11422 / NBRC 100505 / T-27).